The primary structure comprises 98 residues: Large ribosomal subunit protein uL23 (98 aa).

This sequence belongs to the universal ribosomal protein uL23 family. As to quaternary structure, part of the 50S ribosomal subunit. Contacts protein L29, and trigger factor when it is bound to the ribosome.

One of the early assembly proteins it binds 23S rRNA. One of the proteins that surrounds the polypeptide exit tunnel on the outside of the ribosome. Forms the main docking site for trigger factor binding to the ribosome. This is Large ribosomal subunit protein uL23 from Lactobacillus delbrueckii subsp. bulgaricus (strain ATCC 11842 / DSM 20081 / BCRC 10696 / JCM 1002 / NBRC 13953 / NCIMB 11778 / NCTC 12712 / WDCM 00102 / Lb 14).